Here is a 212-residue protein sequence, read N- to C-terminus: Riboflavin kinase (212 aa).

An H-T-H motif-like region spans residues 1–87 (MKKSNLDLLI…HEELSDALYR (87 aa)). Positions 88-212 (GIIIGEVVSG…DGDRIRIKTL (125 aa)) are riboflavin kinase. 97-102 (GIGEGA) contributes to the CDP binding site. Mg(2+) is bound by residues T124 and N126. Residues T180 and E188 each contribute to the FMN site. CDP is bound at residue 193–196 (VNLR).

The protein belongs to the archaeal riboflavin kinase family. Mg(2+) serves as cofactor.

The enzyme catalyses riboflavin + CTP = CDP + FMN + H(+). The protein operates within cofactor biosynthesis; FMN biosynthesis; FMN from riboflavin (CTP route): step 1/1. Functionally, catalyzes the CTP-dependent phosphorylation of riboflavin (vitamin B2) to form flavin mononucleotide (FMN). This chain is Riboflavin kinase (ribK), found in Pyrococcus furiosus (strain ATCC 43587 / DSM 3638 / JCM 8422 / Vc1).